A 1060-amino-acid polypeptide reads, in one-letter code: Carbamoyl phosphate synthase large chain (1060 aa).

The segment at Met1–Glu401 is carboxyphosphate synthetic domain. Residues Arg129, Arg169, Gly175, Gly176, Lys208, Ile210, Glu215, Gly241, Ile242, His243, Gln284, and Glu298 each coordinate ATP. Positions Lys133–Val327 constitute an ATP-grasp 1 domain. The Mg(2+) site is built by Gln284, Glu298, and Asn300. Mn(2+) is bound by residues Gln284, Glu298, and Asn300. The segment at Ile402–Ser546 is oligomerization domain. The carbamoyl phosphate synthetic domain stretch occupies residues Asn547–Gly929. Residues Glu671–Leu861 enclose the ATP-grasp 2 domain. ATP contacts are provided by Arg707, Ser746, Leu748, Glu752, Gly777, Val778, His779, Ser780, Gln820, and Glu832. Mg(2+) contacts are provided by Gln820, Glu832, and Asn834. The Mn(2+) site is built by Gln820, Glu832, and Asn834. The MGS-like domain maps to Leu930 to Ile1060. An allosteric domain region spans residues Leu930 to Ile1060.

The protein belongs to the CarB family. As to quaternary structure, composed of two chains; the small (or glutamine) chain promotes the hydrolysis of glutamine to ammonia, which is used by the large (or ammonia) chain to synthesize carbamoyl phosphate. Tetramer of heterodimers (alpha,beta)4. Mg(2+) serves as cofactor. The cofactor is Mn(2+).

The enzyme catalyses hydrogencarbonate + L-glutamine + 2 ATP + H2O = carbamoyl phosphate + L-glutamate + 2 ADP + phosphate + 2 H(+). It catalyses the reaction hydrogencarbonate + NH4(+) + 2 ATP = carbamoyl phosphate + 2 ADP + phosphate + 2 H(+). Its pathway is amino-acid biosynthesis; L-arginine biosynthesis; carbamoyl phosphate from bicarbonate: step 1/1. The protein operates within pyrimidine metabolism; UMP biosynthesis via de novo pathway; (S)-dihydroorotate from bicarbonate: step 1/3. Functionally, large subunit of the glutamine-dependent carbamoyl phosphate synthetase (CPSase). CPSase catalyzes the formation of carbamoyl phosphate from the ammonia moiety of glutamine, carbonate, and phosphate donated by ATP, constituting the first step of 2 biosynthetic pathways, one leading to arginine and/or urea and the other to pyrimidine nucleotides. The large subunit (synthetase) binds the substrates ammonia (free or transferred from glutamine from the small subunit), hydrogencarbonate and ATP and carries out an ATP-coupled ligase reaction, activating hydrogencarbonate by forming carboxy phosphate which reacts with ammonia to form carbamoyl phosphate. The protein is Carbamoyl phosphate synthase large chain of Enterococcus faecalis (strain ATCC 700802 / V583).